The following is a 304-amino-acid chain: UDP-N-acetylenolpyruvoylglucosamine reductase (304 aa).

The region spanning 33–198 is the FAD-binding PCMH-type domain; sequence RVGGPVDILL…ITATFCFESG (166 aa). Residue R177 is part of the active site. S227 serves as the catalytic Proton donor. E297 is an active-site residue.

The protein belongs to the MurB family. It depends on FAD as a cofactor.

It is found in the cytoplasm. The enzyme catalyses UDP-N-acetyl-alpha-D-muramate + NADP(+) = UDP-N-acetyl-3-O-(1-carboxyvinyl)-alpha-D-glucosamine + NADPH + H(+). It functions in the pathway cell wall biogenesis; peptidoglycan biosynthesis. In terms of biological role, cell wall formation. The polypeptide is UDP-N-acetylenolpyruvoylglucosamine reductase (Clostridium botulinum (strain Eklund 17B / Type B)).